We begin with the raw amino-acid sequence, 390 residues long: MNLHEYQSKHLLKKYNIPVPASEVVFNPDAAVDAAAKIGGDRWVVKAQVHAGGRGKAGGVRLVKNKEELKSAVKALLGTRLVTYQTDERGQPVNQILVEQTSDIARELYLGAVIDRASQRIVFMASTEGGVEIEKVAEKSPEKILKVTIDPAIGLQPFQCRQLFFGLGLQDLKQMRSFTDIVMGLYRLFTERDLSLLEINPLVITGSGELICLDAKINIDDSALYRQSELREMRDTTQEDEHETMAQQWELNYIKLDGNIGCMVNGAGLAMATMDLIKLSGGDPANFLDVGGSATKERVTEAFKIIVSDKNVKGILVNIFGGIVRCDLIADGIISAVKEVGIDVPVVVRLEGNNAQLGAKKLADSDMNIIAAKGFADAAEQIVKQVGVIA.

Residues 9–245 (KHLLKKYNIP…TTQEDEHETM (237 aa)) form the ATP-grasp domain. ATP contacts are provided by residues lysine 46, 53–55 (GRG), glutamate 99, serine 102, and glutamate 107. Mg(2+) contacts are provided by asparagine 200 and aspartate 214. Substrate is bound by residues asparagine 265 and 322–324 (GIV).

Belongs to the succinate/malate CoA ligase beta subunit family. Heterotetramer of two alpha and two beta subunits. Requires Mg(2+) as cofactor.

It catalyses the reaction succinate + ATP + CoA = succinyl-CoA + ADP + phosphate. The catalysed reaction is GTP + succinate + CoA = succinyl-CoA + GDP + phosphate. It participates in carbohydrate metabolism; tricarboxylic acid cycle; succinate from succinyl-CoA (ligase route): step 1/1. Functionally, succinyl-CoA synthetase functions in the citric acid cycle (TCA), coupling the hydrolysis of succinyl-CoA to the synthesis of either ATP or GTP and thus represents the only step of substrate-level phosphorylation in the TCA. The beta subunit provides nucleotide specificity of the enzyme and binds the substrate succinate, while the binding sites for coenzyme A and phosphate are found in the alpha subunit. This chain is Succinate--CoA ligase [ADP-forming] subunit beta, found in Coxiella burnetii (strain RSA 331 / Henzerling II).